The chain runs to 309 residues: Tagatose-6-phosphate kinase (309 aa).

The protein belongs to the carbohydrate kinase PfkB family. LacC subfamily.

It carries out the reaction D-tagatofuranose 6-phosphate + ATP = D-tagatofuranose 1,6-bisphosphate + ADP + H(+). Its pathway is carbohydrate metabolism; D-tagatose 6-phosphate degradation; D-glyceraldehyde 3-phosphate and glycerone phosphate from D-tagatose 6-phosphate: step 1/2. The protein is Tagatose-6-phosphate kinase of Streptococcus pyogenes serotype M28 (strain MGAS6180).